The primary structure comprises 456 residues: Exodeoxyribonuclease 7 large subunit (456 aa).

The protein belongs to the XseA family. Heterooligomer composed of large and small subunits.

It localises to the cytoplasm. It carries out the reaction Exonucleolytic cleavage in either 5'- to 3'- or 3'- to 5'-direction to yield nucleoside 5'-phosphates.. Functionally, bidirectionally degrades single-stranded DNA into large acid-insoluble oligonucleotides, which are then degraded further into small acid-soluble oligonucleotides. The sequence is that of Exodeoxyribonuclease 7 large subunit from Lactobacillus delbrueckii subsp. bulgaricus (strain ATCC BAA-365 / Lb-18).